A 469-amino-acid chain; its full sequence is Glutamine synthetase (469 aa).

In terms of domain architecture, GS beta-grasp spans 13-97 (HEVKFVDLRF…IRCDILEPGT (85 aa)). A GS catalytic domain is found at 105 to 469 (PRSIAKRAED…PVEFELYYSV (365 aa)). 2 residues coordinate Mg(2+): Glu130 and Glu132. An ATP-binding site is contributed by Glu208. Mg(2+) contacts are provided by Glu213 and Glu221. L-glutamate is bound by residues 265-266 (NG) and Gly266. Residue His270 coordinates Mg(2+). ATP contacts are provided by residues 272-274 (HMS) and Ser274. L-glutamate contacts are provided by Arg322, Glu328, and Arg340. Arg340, Arg345, and Lys353 together coordinate ATP. Position 358 (Glu358) interacts with Mg(2+). Arg360 contributes to the L-glutamate binding site. Tyr398 is modified (O-AMP-tyrosine).

The protein belongs to the glutamine synthetase family. Oligomer of 12 subunits arranged in the form of two hexameric ring. The cofactor is Mg(2+).

It localises to the cytoplasm. It catalyses the reaction L-glutamate + NH4(+) + ATP = L-glutamine + ADP + phosphate + H(+). The activity of this enzyme could be controlled by adenylation under conditions of abundant glutamine. Its function is as follows. Catalyzes the ATP-dependent biosynthesis of glutamine from glutamate and ammonia. The protein is Glutamine synthetase of Escherichia coli O157:H7.